The following is a 187-amino-acid chain: 5-hmdU DNA kinase (187 aa).

It belongs to the thymidylate kinase family. 5-hmdU DNA kinase subfamily.

It catalyses the reaction 5-hydroxymethyl-dUMP in DNA + ATP = 5-phosphomethyl-dUMP in DNA + ADP + H(+). Phosphorylates 5-hydroxymethyluracil (5hmdU) into 5-phosphomethyl-2'-deoxyuridine (5-PmdU) on DNA as a step in the pathway leading to thymidine hypermodifications in the viral genome. The phosphate is added internally to the DNA polymer. Also transfers glutamate to 5-pyrophosphoryloxymethyldeoxyuridine (5-PPmdU) to produce 5-Nalpha-glyutamylthymidine (Nalpha-GluT). As a final result of the pathway of hypermodification, 5-aminoethyl-2'-deoxyuridine (5-NedU) substitutes for about 30% of thymidines in the viral DNA. These modifications probably prevent degradation of viral genome by the host restriction-modification antiviral defense system. This is 5-hmdU DNA kinase from Pseudomonas phage M6.